Consider the following 1057-residue polypeptide: Carbamoyl phosphate synthase large chain (1057 aa).

The tract at residues 1-401 is carboxyphosphate synthetic domain; the sequence is MPKRQDIETI…SLLKAIRSLE (401 aa). ATP-binding residues include R129, R169, G175, G176, K208, I210, E215, G241, I242, H243, Q284, and E298. In terms of domain architecture, ATP-grasp 1 spans 133 to 327; it reads RTLMNDLGVP…IAKLAAKIAI (195 aa). The Mg(2+) site is built by Q284, E298, and N300. Mn(2+)-binding residues include Q284, E298, and N300. The tract at residues 402–546 is oligomerization domain; sequence YGVHHLGLPN…YGTYEYENES (145 aa). The tract at residues 547–929 is carbamoyl phosphate synthetic domain; that stretch reads VVTEKEKILV…ALFKGLTASG (383 aa). The ATP-grasp 2 domain maps to 671 to 861; sequence EALLHTIDVP…MAQLAMRAII (191 aa). 10 residues coordinate ATP: R707, R746, L748, E752, G777, V778, H779, S780, Q820, and E832. Residues Q820, E832, and N834 each contribute to the Mg(2+) site. 3 residues coordinate Mn(2+): Q820, E832, and N834. In terms of domain architecture, MGS-like spans 930 to 1057; the sequence is MEVKDHGTVL…ESMTFTMKNM (128 aa). The interval 930–1057 is allosteric domain; it reads MEVKDHGTVL…ESMTFTMKNM (128 aa).

The protein belongs to the CarB family. As to quaternary structure, composed of two chains; the small (or glutamine) chain promotes the hydrolysis of glutamine to ammonia, which is used by the large (or ammonia) chain to synthesize carbamoyl phosphate. Tetramer of heterodimers (alpha,beta)4. Mg(2+) is required as a cofactor. Requires Mn(2+) as cofactor.

It carries out the reaction hydrogencarbonate + L-glutamine + 2 ATP + H2O = carbamoyl phosphate + L-glutamate + 2 ADP + phosphate + 2 H(+). The catalysed reaction is hydrogencarbonate + NH4(+) + 2 ATP = carbamoyl phosphate + 2 ADP + phosphate + 2 H(+). It participates in amino-acid biosynthesis; L-arginine biosynthesis; carbamoyl phosphate from bicarbonate: step 1/1. The protein operates within pyrimidine metabolism; UMP biosynthesis via de novo pathway; (S)-dihydroorotate from bicarbonate: step 1/3. Large subunit of the glutamine-dependent carbamoyl phosphate synthetase (CPSase). CPSase catalyzes the formation of carbamoyl phosphate from the ammonia moiety of glutamine, carbonate, and phosphate donated by ATP, constituting the first step of 2 biosynthetic pathways, one leading to arginine and/or urea and the other to pyrimidine nucleotides. The large subunit (synthetase) binds the substrates ammonia (free or transferred from glutamine from the small subunit), hydrogencarbonate and ATP and carries out an ATP-coupled ligase reaction, activating hydrogencarbonate by forming carboxy phosphate which reacts with ammonia to form carbamoyl phosphate. This is Carbamoyl phosphate synthase large chain from Staphylococcus saprophyticus subsp. saprophyticus (strain ATCC 15305 / DSM 20229 / NCIMB 8711 / NCTC 7292 / S-41).